The sequence spans 350 residues: MSDAVQTGWQLSEQAPLRTLNTFHVEATARWLLNVQAPEALPQALAAPEIAGQPLLVLGSGSNVLLAGDPPGCVLCFDNRETSIIAHRADHAIVRAGAGVNWHALVLYALQQGLSGLENLALIPGTVGACPIQNIGAYGAQVGDFIHVVEAFDRHSQQFVRLDAADCAFGYRDSVFKQQPERYLIVAVEFNLPLLHELRLDYAGIREELASMGAELAGAADVAQAVINIRRRKLPDPDVLGNAGSFFKNPLLPSEQIAALQASFADMPVYPGEHAGQGKLSAAWLIEQCGWKGKREGDAGVSPDHALVLVNYGTATGAQLLDFARRIAESVRERYSVILEPEPRIIGAHW.

The FAD-binding PCMH-type domain maps to 24-195 (HVEATARWLL…VAVEFNLPLL (172 aa)). The active site involves arginine 172. The Proton donor role is filled by serine 245. Glutamate 342 is an active-site residue.

Belongs to the MurB family. The cofactor is FAD.

It localises to the cytoplasm. The enzyme catalyses UDP-N-acetyl-alpha-D-muramate + NADP(+) = UDP-N-acetyl-3-O-(1-carboxyvinyl)-alpha-D-glucosamine + NADPH + H(+). Its pathway is cell wall biogenesis; peptidoglycan biosynthesis. In terms of biological role, cell wall formation. This is UDP-N-acetylenolpyruvoylglucosamine reductase from Xanthomonas axonopodis pv. citri (strain 306).